A 520-amino-acid chain; its full sequence is Transactivator/viroplasmin protein (520 aa).

Positions 486 to 520 (VQDASADSGPKDGPPPTRSIVEKEDVPTTSSKQVD) are disordered.

Belongs to the caulimoviridae viroplasmin family.

It is found in the host cytoplasm. Functionally, enhances the ribosomal termination-reinitiation event leading to the translation of major open reading frames on the polycistronic viral RNAs. The chain is Transactivator/viroplasmin protein from Cauliflower mosaic virus (strain BBC) (CaMV).